The primary structure comprises 317 residues: MTTALDQLKQYTTVVADTGDFQQLAQYKPQDATTNPSLILKAVQKDAYRPILEKTVRDHAGESVGFIIDRLLIAFGTEILKLIPGRVSTEVDARLSFDTQRSIDKGREIIKLYEAAGVGRERVLIKLASTWEGIRAAEVLQREGIRCNMTLLFSLVQAAACAEAGAQLISPFVGRIYDWYKKQKGADWDEAQDGGANDPGVQSVRRIYTYYKHFGYRTEVMGASFRTTSQITELAGCDLLTISPELLQKLHDSTEAVARKLSPDEARDARLERVAIDESSFRFQLNDDAMATEKLAEGIRLFSADAVKLEKMIEALR.

The active-site Schiff-base intermediate with substrate is the K126.

The protein belongs to the transaldolase family. Type 1 subfamily. Homodimer.

It is found in the cytoplasm. It catalyses the reaction D-sedoheptulose 7-phosphate + D-glyceraldehyde 3-phosphate = D-erythrose 4-phosphate + beta-D-fructose 6-phosphate. It functions in the pathway carbohydrate degradation; pentose phosphate pathway; D-glyceraldehyde 3-phosphate and beta-D-fructose 6-phosphate from D-ribose 5-phosphate and D-xylulose 5-phosphate (non-oxidative stage): step 2/3. Transaldolase is important for the balance of metabolites in the pentose-phosphate pathway. This chain is Transaldolase, found in Burkholderia pseudomallei (strain K96243).